The chain runs to 216 residues: Large ribosomal subunit protein bL21 (216 aa).

It belongs to the bacterial ribosomal protein bL21 family. Part of the 50S ribosomal subunit. Contacts protein L20.

Its function is as follows. This protein binds to 23S rRNA in the presence of protein L20. The protein is Large ribosomal subunit protein bL21 of Roseobacter denitrificans (strain ATCC 33942 / OCh 114) (Erythrobacter sp. (strain OCh 114)).